The primary structure comprises 292 residues: 5,10-methylenetetrahydrofolate reductase (292 aa).

E26 functions as the Proton donor/acceptor in the catalytic mechanism. T57 serves as a coordination point for NADH. FAD-binding residues include Y58, A60, H86, R116, G117, D118, A130, Y150, H154, A157, D163, N166, R169, and K170. A (6S)-5-methyl-5,6,7,8-tetrahydrofolate-binding site is contributed by D118. Q181 provides a ligand contact to NADH. The (6S)-5-methyl-5,6,7,8-tetrahydrofolate site is built by Q181, Q217, and R277.

Belongs to the methylenetetrahydrofolate reductase family. It depends on FAD as a cofactor.

The catalysed reaction is (6S)-5-methyl-5,6,7,8-tetrahydrofolate + NAD(+) = (6R)-5,10-methylene-5,6,7,8-tetrahydrofolate + NADH + H(+). It participates in one-carbon metabolism; tetrahydrofolate interconversion. Its pathway is amino-acid biosynthesis; L-methionine biosynthesis via de novo pathway. Its function is as follows. Catalyzes the NADH-dependent reduction of 5,10-methylenetetrahydrofolate to 5-methyltetrahydrofolate. Is required to provide the methyl group necessary for methionine synthetase to convert homocysteine to methionine; the methyl group is given by 5-methyltetrahydrofolate. In Neisseria meningitidis serogroup B (strain ATCC BAA-335 / MC58), this protein is 5,10-methylenetetrahydrofolate reductase (metF).